The primary structure comprises 595 residues: DNA mismatch repair protein MutL (595 aa).

It belongs to the DNA mismatch repair MutL/HexB family.

Its function is as follows. This protein is involved in the repair of mismatches in DNA. It is required for dam-dependent methyl-directed DNA mismatch repair. May act as a 'molecular matchmaker', a protein that promotes the formation of a stable complex between two or more DNA-binding proteins in an ATP-dependent manner without itself being part of a final effector complex. The chain is DNA mismatch repair protein MutL from Endomicrobium trichonymphae.